The sequence spans 421 residues: CaM kinase-like vesicle-associated protein (421 aa).

Residues 24 to 284 (YDLGQVVKSE…AQEAIAHEWI (261 aa)) form the Protein kinase domain. The tract at residues 326-421 (ASEQGDTGAS…PQMLPQRKGY (96 aa)) is disordered. Composition is skewed to low complexity over residues 330–340 (GDTGASGLAAG) and 390–406 (QQQA…QQAR).

Belongs to the protein kinase superfamily. CAMK Ser/Thr protein kinase family. Interacts with calmodulin, in the presence of calcium. Ca(2+) serves as cofactor. In terms of tissue distribution, ubiquitously expressed.

It is found in the cytoplasmic vesicle membrane. Functionally, does not appear to have detectable kinase activity. The sequence is that of CaM kinase-like vesicle-associated protein (camkv) from Takifugu rubripes (Japanese pufferfish).